The sequence spans 206 residues: Peptidyl-tRNA hydrolase (206 aa).

Tyr14 provides a ligand contact to tRNA. His19 (proton acceptor) is an active-site residue. TRNA is bound by residues Phe64 and Asn66. Residues 185 to 206 (VNGEAPKKSKDQAKEPANEQPR) form a disordered region. A compositionally biased stretch (basic and acidic residues) spans 189–206 (APKKSKDQAKEPANEQPR).

The protein belongs to the PTH family. Monomer.

Its subcellular location is the cytoplasm. The catalysed reaction is an N-acyl-L-alpha-aminoacyl-tRNA + H2O = an N-acyl-L-amino acid + a tRNA + H(+). In terms of biological role, hydrolyzes ribosome-free peptidyl-tRNAs (with 1 or more amino acids incorporated), which drop off the ribosome during protein synthesis, or as a result of ribosome stalling. Catalyzes the release of premature peptidyl moieties from peptidyl-tRNA molecules trapped in stalled 50S ribosomal subunits, and thus maintains levels of free tRNAs and 50S ribosomes. The sequence is that of Peptidyl-tRNA hydrolase from Herpetosiphon aurantiacus (strain ATCC 23779 / DSM 785 / 114-95).